The primary structure comprises 1692 residues: Flagellar attachment zone protein 1 (1692 aa).

3 coiled-coil regions span residues Arg-613–Lys-657, Val-684–Arg-864, and Asn-903–Glu-1607. Repeat copies occupy residues Glu-1012–Ala-1025, Glu-1026–Ala-1039, Glu-1040–Ala-1053, Glu-1054–Ala-1067, Glu-1068–Ala-1081, Glu-1082–Ala-1095, Glu-1096–Ala-1109, Glu-1110–Ala-1123, Glu-1124–Ala-1137, Glu-1138–Ala-1151, Glu-1152–Ala-1165, Glu-1166–Ala-1179, Glu-1180–Ala-1193, Glu-1194–Ala-1207, Glu-1208–Ala-1221, Glu-1222–Ala-1235, Glu-1236–Ala-1249, Glu-1250–Ala-1263, Glu-1264–Ala-1277, Glu-1278–Ala-1291, Glu-1292–Ala-1305, Glu-1306–Ala-1319, Glu-1320–Ala-1333, Glu-1334–Ala-1347, Glu-1348–Ala-1361, Glu-1362–Ala-1375, Glu-1376–Ala-1389, Glu-1390–Ala-1403, Glu-1404–Ala-1417, Glu-1418–Ala-1431, Glu-1432–Ala-1445, Glu-1446–Ala-1459, Glu-1460–Ala-1473, Glu-1474–Ala-1487, Glu-1488–Ala-1501, Glu-1502–Ala-1515, and Glu-1516–Ala-1529. Residues Glu-1012–Ala-1529 form a 37 X 14 AA tandem repeats of E-E-L-E-L-K-[VA]-A-E-N-E-K-L-A region.

Its subcellular location is the cell projection. It localises to the cilium. It is found in the flagellum. A component of FAZ filament that is required for correct FAZ assembly and attachment. Not essential for new flagellum growth. The chain is Flagellar attachment zone protein 1 from Trypanosoma brucei brucei (strain 927/4 GUTat10.1).